The primary structure comprises 184 residues: ATP synthase subunit b, chloroplastic (184 aa).

The chain crosses the membrane as a helical span at residues 27–49 (LATNPINLSVVLGVLIFFGKGVL).

It belongs to the ATPase B chain family. As to quaternary structure, F-type ATPases have 2 components, F(1) - the catalytic core - and F(0) - the membrane proton channel. F(1) has five subunits: alpha(3), beta(3), gamma(1), delta(1), epsilon(1). F(0) has four main subunits: a(1), b(1), b'(1) and c(10-14). The alpha and beta chains form an alternating ring which encloses part of the gamma chain. F(1) is attached to F(0) by a central stalk formed by the gamma and epsilon chains, while a peripheral stalk is formed by the delta, b and b' chains.

The protein resides in the plastid. It localises to the chloroplast thylakoid membrane. In terms of biological role, f(1)F(0) ATP synthase produces ATP from ADP in the presence of a proton or sodium gradient. F-type ATPases consist of two structural domains, F(1) containing the extramembraneous catalytic core and F(0) containing the membrane proton channel, linked together by a central stalk and a peripheral stalk. During catalysis, ATP synthesis in the catalytic domain of F(1) is coupled via a rotary mechanism of the central stalk subunits to proton translocation. Its function is as follows. Component of the F(0) channel, it forms part of the peripheral stalk, linking F(1) to F(0). This chain is ATP synthase subunit b, chloroplastic, found in Solanum bulbocastanum (Wild potato).